The chain runs to 389 residues: Large envelope protein (389 aa).

M1 is subject to N-acetylmethionine. G2 carries the N-myristoyl glycine; by host lipid modification. A pre-S1 region spans residues 2 to 108 (GQNLSVTNPL…PPLRDTHPQA (107 aa)). The segment at 2-163 (GQNLSVTNPL…FLKTGDPALN (162 aa)) is pre-S. The Virion surface; in external conformation portion of the chain corresponds to 2–170 (GQNLSVTNPL…ALNMESISSG (169 aa)). Residues 2-242 (GQNLSVTNPL…PGYRWMCLRR (241 aa)) are Intravirion; in internal conformation-facing. A disordered region spans residues 78 to 105 (PAVPPPASTNRQSGRRPTPISPPLRDTH). Residues 109–163 (MQWNSTVFHQALQDPRVRGLYFPAGGSSSGTVSPVPTTASPISSTFLKTGDPALN) are pre-S2. The helical transmembrane segment at 171-191 (FLGPLLVLQAGFFLLTKILTI) threads the bilayer. The Intravirion; in external conformation segment spans residues 192 to 242 (PQSLDSWWTSLNFLGGAPVCPGQNSQSLTSNHSPTSCPPICPGYRWMCLRR). Residues 243 to 263 (FIIFLFILLLCLIFLLVLLDY) form a helical membrane-spanning segment. The Virion surface portion of the chain corresponds to 264–337 (RGMLPVCPLL…WASVRFSWLN (74 aa)). A glycan (N-linked (GlcNAc...) asparagine; by host) is linked at N309. Residues 338-358 (LLVPFVQWFAGLSPTVWLSVI) traverse the membrane as a helical segment. Over 359–364 (WMIWYW) the chain is Intravirion. A helical membrane pass occupies residues 365 to 387 (GPSLYNILSPFIPLLPIFFCLWA). At 388 to 389 (YI) the chain is on the virion surface side.

Belongs to the orthohepadnavirus major surface antigen family. In terms of assembly, in its internal form (Li-HBsAg), interacts with the capsid protein and with the isoform S. Interacts with host chaperone CANX. As to quaternary structure, associates with host chaperone CANX through its pre-S2 N glycan; this association may be essential for isoform M proper secretion. Interacts with isoform L. Interacts with the antigens of satellite virus HDV (HDVAgs); this interaction is required for encapsidation of HDV genomic RNA. In terms of processing, isoform M is N-terminally acetylated by host at a ratio of 90%, and N-glycosylated by host at the pre-S2 region. Post-translationally, myristoylated.

It is found in the virion membrane. The large envelope protein exists in two topological conformations, one which is termed 'external' or Le-HBsAg and the other 'internal' or Li-HBsAg. In its external conformation the protein attaches the virus to cell receptors and thereby initiating infection. This interaction determines the species specificity and liver tropism. This attachment induces virion internalization predominantly through caveolin-mediated endocytosis. The large envelope protein also assures fusion between virion membrane and endosomal membrane. In its internal conformation the protein plays a role in virion morphogenesis and mediates the contact with the nucleocapsid like a matrix protein. In terms of biological role, the middle envelope protein plays an important role in the budding of the virion. It is involved in the induction of budding in a nucleocapsid independent way. In this process the majority of envelope proteins bud to form subviral lipoprotein particles of 22 nm of diameter that do not contain a nucleocapsid. The protein is Large envelope protein of Pongo pygmaeus (Bornean orangutan).